The sequence spans 120 residues: Aspartate 1-decarboxylase (120 aa).

Ser-25 (schiff-base intermediate with substrate; via pyruvic acid) is an active-site residue. Residue Ser-25 is modified to Pyruvic acid (Ser). Thr-57 is a substrate binding site. Tyr-58 (proton donor) is an active-site residue. Residue 73–75 (GAA) participates in substrate binding.

It belongs to the PanD family. As to quaternary structure, heterooctamer of four alpha and four beta subunits. It depends on pyruvate as a cofactor. Is synthesized initially as an inactive proenzyme, which is activated by self-cleavage at a specific serine bond to produce a beta-subunit with a hydroxyl group at its C-terminus and an alpha-subunit with a pyruvoyl group at its N-terminus.

The protein resides in the cytoplasm. The catalysed reaction is L-aspartate + H(+) = beta-alanine + CO2. Its pathway is cofactor biosynthesis; (R)-pantothenate biosynthesis; beta-alanine from L-aspartate: step 1/1. Catalyzes the pyruvoyl-dependent decarboxylation of aspartate to produce beta-alanine. The chain is Aspartate 1-decarboxylase from Deinococcus radiodurans (strain ATCC 13939 / DSM 20539 / JCM 16871 / CCUG 27074 / LMG 4051 / NBRC 15346 / NCIMB 9279 / VKM B-1422 / R1).